Here is a 432-residue protein sequence, read N- to C-terminus: Major royal jelly protein 1 (432 aa).

A signal peptide spans 1-19 (MTRLFMLVCLGIVCQGTTG). N-linked (GlcNAc...) asparagine glycans are attached at residues Asn28, Asn144, and Asn177. 3 disulfides stabilise this stretch: Cys118/Cys150, Cys132/Cys195, and Cys329/Cys416. Residue Pro364 coordinates 24-methylenecholesterol. His431 is subject to Histidine amide; atypical. Residue Leu432 is modified to Leucine amide; atypical.

This sequence belongs to the major royal jelly protein family. As to quaternary structure, is present in royal jelly in different forms: monomer (55 kDa), oligomeric subunit (ca. 287-420 kDa), and water-insoluble aggregates in sediment after interaction with fatty acids. Component of the apisin heterooligomer complex consisting of 4 copies of MRJP1 and 4 copies of apisimin, associated with 8 molecules of 24-methylenecholesterol; apisimin forms a bridge connecting two MRJP1 dimers. At low pH multiple apisin octamers stack to form filaments that increase the viscosity of royal jelly; these filaments may be stabilized by bound fatty acid chains. The mandibular gland, where royal jelly is produced, has low pH conditions favouring filament formation, while the higher pH of the insect midgut favors filament disassembly. Post-translationally, N-glycosylated on Asn-28, Asn-144 and Asn-177. Glycosylation is required to prevent apisin multimers from aggregating. In terms of processing, jellein-2 is probably processed to yield jellein-1 and jellein-4. In terms of tissue distribution, found in and secreted from the hypopharyngeal glands of the worker honey bee (at protein level); expression peaks at 12 days post eclosion. Expressed in the brains of worker bees (at protein level); found in antennal lobe, optical lobe and a subpopulation of Kenyon cells in the mushroom body. Found in the ommatidia of worker bees (at protein level). Expressed in the spermatheca of adult queen bees (at protein level); expression levels are higher in mated queens than in virgin queens. Expressed in queen bee ovaries and male drone testes.

The protein resides in the secreted. It localises to the cytoplasm. Its subcellular location is the cell projection. The protein localises to the rhabdomere. It is found in the cytoskeleton. Functionally, most abundant protein component of royal jelly, a substance produced in the hypopharyngeal gland containing proteins, free amino acids, fatty acids, sugars and other nutrients, which is fed to developing larvae by worker nurse bees. Major royal jelly proteins (Mrjps) are high in essential amino acids and probably have a nutritional function in larval food. All larvae are fed some royal jelly (also known as worker jelly) early in their development but it forms the principal source of nutrition for larvae destined to become queen bees. Induces the differentiation of honey bee larvae into queens through an Egfr-mediated signaling pathway. Promotes body size increase by activating p70 S6 kinase, stimulates ovary development by augmenting the titer of vitellogenin (Vg) and juvenile hormone, and reduces developmental time by increasing the activity of mitogen-activated protein kinase and inducing 20-hydroxyecdysone (ecdysterone, 20E) production. Together with apisimin forms the apisin complex that polymerizes at low pH, forming a fiber network and increasing the viscosity of royal jelly. The viscous royal Jelly placed in honeycomb cells containing larvae destined to become queens acts as both a food supply and an adhesive preventing larvae from falling out; queens are reared in special large cells oriented vertically. Produced in the spermatheca of adult queen bees, along with other major royal jelly proteins, where it may act as a nutrient supply for sperm stored by mated queens, or be involved in energy metabolism. Has antibacterial activity against the Gram-positive bacteria S.aureus ATCC 6535, S.saprophyticus and B.subtilis CCT2471, and the Gram-negative bacteria E.coli CCT1371, E.cloacae ATCC 23355, K.pneumoniae ATCC 13883 and P.aeruginosa ATCC 27853, and antifungal activity against C.albicans. Lack cytolytic activity and does not induce rat peritoneal mast cell degranulation. In terms of biological role, lacks antibacterial and antifungal activity. Lacks cytolytic activity and does not induce rat peritoneal mast cell degranulation. This chain is Major royal jelly protein 1, found in Apis mellifera (Honeybee).